The sequence spans 1433 residues: DNA polymerase III PolC-type (1433 aa).

In terms of domain architecture, Exonuclease spans 419-575 (FVVFDVETTG…YDAEATGHLL (157 aa)).

The protein belongs to the DNA polymerase type-C family. PolC subfamily.

The protein localises to the cytoplasm. The enzyme catalyses DNA(n) + a 2'-deoxyribonucleoside 5'-triphosphate = DNA(n+1) + diphosphate. In terms of biological role, required for replicative DNA synthesis. This DNA polymerase also exhibits 3' to 5' exonuclease activity. The chain is DNA polymerase III PolC-type from Halalkalibacterium halodurans (strain ATCC BAA-125 / DSM 18197 / FERM 7344 / JCM 9153 / C-125) (Bacillus halodurans).